We begin with the raw amino-acid sequence, 347 residues long: Probable dual-specificity RNA methyltransferase RlmN (347 aa).

Glutamate 94 (proton acceptor) is an active-site residue. The Radical SAM core domain occupies 100–319; the sequence is YPSRTIACIS…LDTLVKNGID (220 aa). Cysteine 107 and cysteine 334 are disulfide-bonded. Residues cysteine 114, cysteine 118, and cysteine 121 each coordinate [4Fe-4S] cluster. S-adenosyl-L-methionine contacts are provided by residues 161–162, serine 193, 216–218, and asparagine 292; these read GE and SLH. The active-site S-methylcysteine intermediate is the cysteine 334.

Belongs to the radical SAM superfamily. RlmN family. [4Fe-4S] cluster is required as a cofactor.

Its subcellular location is the cytoplasm. It catalyses the reaction adenosine(2503) in 23S rRNA + 2 reduced [2Fe-2S]-[ferredoxin] + 2 S-adenosyl-L-methionine = 2-methyladenosine(2503) in 23S rRNA + 5'-deoxyadenosine + L-methionine + 2 oxidized [2Fe-2S]-[ferredoxin] + S-adenosyl-L-homocysteine. The enzyme catalyses adenosine(37) in tRNA + 2 reduced [2Fe-2S]-[ferredoxin] + 2 S-adenosyl-L-methionine = 2-methyladenosine(37) in tRNA + 5'-deoxyadenosine + L-methionine + 2 oxidized [2Fe-2S]-[ferredoxin] + S-adenosyl-L-homocysteine. Functionally, specifically methylates position 2 of adenine 2503 in 23S rRNA and position 2 of adenine 37 in tRNAs. This Petrotoga mobilis (strain DSM 10674 / SJ95) protein is Probable dual-specificity RNA methyltransferase RlmN.